The primary structure comprises 400 residues: Putative transposase for insertion sequence element IS5376 (400 aa).

In terms of domain architecture, HTH IS21-type spans 5–67 (GEFFMIKEMY…PFKPYLQKRM (63 aa)). The segment at residues 20–39 (ISDIARELGIDRKTVRKYIH) is a DNA-binding region (H-T-H motif). Residues 35 to 55 (RKYIHSPNPPSKSKRKQRKSK) are disordered. The Integrase catalytic domain maps to 113 to 287 (YETLPGEQMQ…SPQERWAEES (175 aa)).

It belongs to the transposase IS21/IS408/IS1162 family.

In terms of biological role, involved in the transposition of the insertion sequence. This chain is Putative transposase for insertion sequence element IS5376, found in Geobacillus stearothermophilus (Bacillus stearothermophilus).